Here is a 402-residue protein sequence, read N- to C-terminus: Serine/threonine transporter SstT (402 aa).

8 helical membrane-spanning segments follow: residues 17-37, 44-64, 78-98, 138-158, 179-199, 212-232, 295-315, and 336-356; these read IAIGVVIGAILGLLIPKITVI, FVGGLKAIAPLLVSALVANAL, IIVLYLFGTFAAALTAVISHY, ALSQANYIGVLVWSVVFGFAM, IVRWIINLAPFGILGLVFDTI, VLILVLVGTMTFVALVINPII, MAGAAVTINVLTLAAVTTLGI, and ASGIAGGSLLLVPVACSLFGI.

The protein belongs to the dicarboxylate/amino acid:cation symporter (DAACS) (TC 2.A.23) family.

It localises to the cell membrane. The catalysed reaction is L-serine(in) + Na(+)(in) = L-serine(out) + Na(+)(out). It carries out the reaction L-threonine(in) + Na(+)(in) = L-threonine(out) + Na(+)(out). Functionally, involved in the import of serine and threonine into the cell, with the concomitant import of sodium (symport system). This is Serine/threonine transporter SstT from Streptococcus thermophilus (strain ATCC BAA-250 / LMG 18311).